A 46-amino-acid polypeptide reads, in one-letter code: Protein YpdJ (46 aa).

In terms of biological role, may be involved in H(2) production during fermentative growth. This chain is Protein YpdJ (ypdJ), found in Escherichia coli (strain K12).